The primary structure comprises 457 residues: Reticulon-like protein B18 (457 aa).

Positions 94 to 183 are disordered; sequence AAVTARRSKT…SPSSDQPQDV (90 aa). A compositionally biased stretch (basic and acidic residues) spans 124–136; the sequence is LRSEAMVDTKENT. The span at 149–163 shows a compositional bias: basic residues; it reads NQRKQKKLGRSKKEK. Positions 166 to 183 are enriched in low complexity; it reads SVPLLASPSPSSDQPQDV. The region spanning 195 to 385 is the Reticulon domain; that stretch reads ISDLIMWRDV…AFWNLTSLKT (191 aa). Helical transmembrane passes span 208-228, 230-250, 314-334, and 377-397; these read TLWF…AKGF, FSVF…SFLS, YGYL…SFTI, and FWNL…VVVI. The segment at 407–457 is disordered; sequence DSEDEEEKKQQEKTHPEQQKSPEDKSTSPRSAEEEQALVLVAETKAPKKLY. Positions 413–439 are enriched in basic and acidic residues; it reads EKKQQEKTHPEQQKSPEDKSTSPRSAE.

It localises to the endoplasmic reticulum membrane. This is Reticulon-like protein B18 (RTNLB18) from Arabidopsis thaliana (Mouse-ear cress).